A 72-amino-acid polypeptide reads, in one-letter code: Beta-defensin 104 (72 aa).

The N-terminal stretch at 1–22 (MQRLVLLLAISLLLYQDLPVRS) is a signal peptide. 3 cysteine pairs are disulfide-bonded: Cys-30/Cys-57, Cys-37/Cys-51, and Cys-41/Cys-58.

It belongs to the beta-defensin family. High expression in the testis. Gastric antrum exhibited relatively high levels. A lower expression is observed in uterus and neutrophils thyroid gland, lung, and kidney. No detectable expression in other tissues tested.

The protein localises to the secreted. In terms of biological role, has antimicrobial activity. Synergistic effects with lysozyme and DEFB103. In Homo sapiens (Human), this protein is Beta-defensin 104 (DEFB104A).